We begin with the raw amino-acid sequence, 588 residues long: Aspartate--tRNA ligase (588 aa).

Glu177 is an L-aspartate binding site. The aspartate stretch occupies residues 201–204 (QLFK). L-aspartate is bound at residue Arg223. ATP-binding positions include 223–225 (RDE) and Gln232. His451 is a binding site for L-aspartate. ATP is bound at residue Glu485. Arg492 is an L-aspartate binding site. 537 to 540 (GLDR) contacts ATP.

It belongs to the class-II aminoacyl-tRNA synthetase family. Type 1 subfamily. Homodimer.

Its subcellular location is the cytoplasm. It catalyses the reaction tRNA(Asp) + L-aspartate + ATP = L-aspartyl-tRNA(Asp) + AMP + diphosphate. In terms of biological role, catalyzes the attachment of L-aspartate to tRNA(Asp) in a two-step reaction: L-aspartate is first activated by ATP to form Asp-AMP and then transferred to the acceptor end of tRNA(Asp). This Staphylococcus aureus (strain MRSA252) protein is Aspartate--tRNA ligase.